Here is a 2575-residue protein sequence, read N- to C-terminus: Non-reducing polyketide synthase pks11 (2575 aa).

The region spanning 89–228 (LANIILSPLV…ASKTVSTLQG (140 aa)) is the Starter acyltransferase (SAT) domain. Cys129 serves as the catalytic Nucleophile; for transacylase activity. His247 (proton donor/acceptor; for transacylase activity) is an active-site residue. The region spanning 373 to 790 (EDDIAVVGMS…GSNASAVVTE (418 aa)) is the Ketosynthase family 3 (KS3) domain. Active-site for beta-ketoacyl synthase activity residues include Cys538, His673, and His713. Residues 901 to 1192 (FGGQISTYVG…TNMASRALGS (292 aa)) enclose the Malonyl-CoA:ACP transacylase (MAT) domain. The N-terminal hotdog fold stretch occupies residues 1276 to 1409 (PKGLWSFIDY…GQIIFVSTDN (134 aa)). One can recognise a PKS/mFAS DH domain in the interval 1276 to 1586 (PKGLWSFIDY…YHKVAKATMS (311 aa)). Residues 1307 to 1584 (LVSGHIIAQT…VNYHKVAKAT (278 aa)) form a product template (PT) domain region. Residue His1311 is the Proton acceptor; for dehydratase activity of the active site. The segment at 1437–1586 (ADDIIQGRNI…YHKVAKATMS (150 aa)) is C-terminal hotdog fold. The active-site Proton donor; for dehydratase activity is the Asp1493. Residues 1597 to 1606 (TTSTSTNVKS) are compositionally biased toward polar residues. Residues 1597-1636 (TTSTSTNVKSSPAAAEGSSPVENGASGSGSKAKKTKSGAG) form a disordered region. A Carrier domain is found at 1637–1711 (QDVVNKTKGL…GLVQIIKSTL (75 aa)). Ser1671 is modified (O-(pantetheine 4'-phosphoryl)serine). Residues 1713-1762 (VSDDEEGSDQEGSEASSSESSTTFTPSTTATTVSDVEDNGNEKSIGKEKS) form a disordered region. Positions 1714–1724 (SDDEEGSDQEG) are enriched in acidic residues. Residues 1725 to 1746 (SEASSSESSTTFTPSTTATTVS) are compositionally biased toward low complexity. The span at 1752–1762 (GNEKSIGKEKS) shows a compositional bias: basic and acidic residues. A methyltransferase domain region spans residues 1835-2130 (LTRIPHDPQH…HIDWTDGNSP (296 aa)). Residues 2204–2448 (ITGATGSLGS…LCWTPVDDVA (245 aa)) form the Thioester reductase (TE) domain.

Requires pantetheine 4'-phosphate as cofactor.

Its pathway is secondary metabolite biosynthesis. Functionally, non-reducing polyketide synthase; part of the gene cluster that mediates the biosynthesis of mitorubrinol and mitorubrinic acid, two virulence factors that improve T.marneffei intracellular survival in macrophages. The two polyketide synthases pks12 and pks11 are probably responsible for sequential use in the biosynthesis of mitorubrinol and mitorubrinic acid. The first part of the biosynthesis is probably catalyzed by pks12, which synthesized orsellinic acid. This tetraketide is then used as a starter unit for pks11, which possesses a SAT domain, in the second part of the biosynthesis. Pks11, contains a methyltransferase domain, also served that methylates the products, using a methyl group from S-adenosylmethionine. This chain is Non-reducing polyketide synthase pks11, found in Talaromyces marneffei (Penicillium marneffei).